Here is a 496-residue protein sequence, read N- to C-terminus: Chromosomal replication initiator protein DnaA (496 aa).

A domain I, interacts with DnaA modulators region spans residues 1–76; sequence MKMDSAVSEE…TELWQEENPQ (76 aa). Positions 76–150 are domain II; sequence QILKVEVVVR…AAATGAVLGS (75 aa). The interval 151-373 is domain III, AAA+ region; the sequence is PLDPRYTFDT…GAFNQLLFRQ (223 aa). 4 residues coordinate ATP: Gly197, Gly199, Lys200, and Thr201. The domain IV, binds dsDNA stretch occupies residues 374–496; the sequence is SFEPNISIDR…LKRLINDQAA (123 aa).

The protein belongs to the DnaA family. As to quaternary structure, oligomerizes as a right-handed, spiral filament on DNA at oriC.

It localises to the cytoplasm. Functionally, plays an essential role in the initiation and regulation of chromosomal replication. ATP-DnaA binds to the origin of replication (oriC) to initiate formation of the DNA replication initiation complex once per cell cycle. Binds the DnaA box (a 9 base pair repeat at the origin) and separates the double-stranded (ds)DNA. Forms a right-handed helical filament on oriC DNA; dsDNA binds to the exterior of the filament while single-stranded (ss)DNA is stabiized in the filament's interior. The ATP-DnaA-oriC complex binds and stabilizes one strand of the AT-rich DNA unwinding element (DUE), permitting loading of DNA polymerase. After initiation quickly degrades to an ADP-DnaA complex that is not apt for DNA replication. Binds acidic phospholipids. This Brucella abortus biovar 1 (strain 9-941) protein is Chromosomal replication initiator protein DnaA.